Reading from the N-terminus, the 114-residue chain is MTYLVYIVFTIVLTVGLILVSYLLSQAQPDSEKVSAYECGFSPLGDARQKFDVSFYLIAILFIIFDLEVVFILPFASVIHNVSLLGGWITIIFLVILTIGFIYEFVSGAITDSF.

3 helical membrane passes run 4 to 24, 55 to 75, and 82 to 102; these read LVYI…SYLL, FYLI…ILPF, and VSLL…IGFI.

It belongs to the complex I subunit 3 family.

Its subcellular location is the mitochondrion membrane. The catalysed reaction is a ubiquinone + NADH + 5 H(+)(in) = a ubiquinol + NAD(+) + 4 H(+)(out). Functionally, core subunit of the mitochondrial membrane respiratory chain NADH dehydrogenase (Complex I) that is believed to belong to the minimal assembly required for catalysis. Complex I functions in the transfer of electrons from NADH to the respiratory chain. The immediate electron acceptor for the enzyme is believed to be ubiquinone. The polypeptide is NADH-ubiquinone oxidoreductase chain 3 (ND3) (Allomyces macrogynus).